The chain runs to 319 residues: D-alanine--D-alanine ligase (319 aa).

Residues 109-313 (KRVWLAEGLP…YEQLCLHILQ (205 aa)) enclose the ATP-grasp domain. Residue 139 to 194 (PDDLGLPLIVKPPREGSSIGVTKVLGYSQMQDAVALSARHDPDVLCEEFIDGAEVT) coordinates ATP. Residues D266, E280, and N282 each coordinate Mg(2+).

The protein belongs to the D-alanine--D-alanine ligase family. Mg(2+) serves as cofactor. Mn(2+) is required as a cofactor.

The protein localises to the cytoplasm. The catalysed reaction is 2 D-alanine + ATP = D-alanyl-D-alanine + ADP + phosphate + H(+). It functions in the pathway cell wall biogenesis; peptidoglycan biosynthesis. Functionally, cell wall formation. The polypeptide is D-alanine--D-alanine ligase (Methylibium petroleiphilum (strain ATCC BAA-1232 / LMG 22953 / PM1)).